The primary structure comprises 535 residues: Prolyl 4-hydroxylase subunit alpha-2 (535 aa).

Residues 1-21 (MKLWVSALLMAWFGVLSCVQA) form the signal peptide. Asn115 is a glycosylation site (N-linked (GlcNAc...) asparagine). Residues 207 to 240 (SQVLDYLSYAVFQLGDLHRALELTRRLLSLDPSH) form a TPR repeat. Asn264 carries N-linked (GlcNAc...) asparagine glycosylation. One can recognise a Fe2OG dioxygenase domain in the interval 412 to 520 (TAELLQVANY…KWVSNKWFHE (109 aa)). 2 residues coordinate Fe cation: His430 and Asp432. Position 480 is an N6-succinyllysine (Lys480). His501 serves as a coordination point for Fe cation. Residue Lys511 coordinates 2-oxoglutarate.

The protein belongs to the P4HA family. As to quaternary structure, heterotetramer of two alpha-2 chains and two beta chains (P4HB) (the beta chain is the multi-functional PDI), where P4HB plays the role of a structural subunit; this tetramer catalyzes the formation of 4-hydroxyproline in collagen. The cofactor is Fe(2+). L-ascorbate is required as a cofactor. In terms of tissue distribution, expressed in the heart, placenta, lung and pancreas.

Its subcellular location is the endoplasmic reticulum lumen. The catalysed reaction is L-prolyl-[collagen] + 2-oxoglutarate + O2 = trans-4-hydroxy-L-prolyl-[collagen] + succinate + CO2. Its activity is regulated as follows. Inhibited by poly(L-proline) only at very high concentrations. Its function is as follows. Catalyzes the post-translational formation of 4-hydroxyproline in -Xaa-Pro-Gly- sequences in collagens and other proteins. In Homo sapiens (Human), this protein is Prolyl 4-hydroxylase subunit alpha-2 (P4HA2).